The primary structure comprises 479 residues: Glutamate--tRNA ligase (479 aa).

The 'HIGH' region motif lies at 21–31; it reads PSPTGYLHVGG. The short motif at 248-252 is the 'KMSKS' region element; it reads KLSKR. K251 is an ATP binding site.

This sequence belongs to the class-I aminoacyl-tRNA synthetase family. Glutamate--tRNA ligase type 1 subfamily. As to quaternary structure, monomer.

The protein resides in the cytoplasm. It catalyses the reaction tRNA(Glu) + L-glutamate + ATP = L-glutamyl-tRNA(Glu) + AMP + diphosphate. Functionally, catalyzes the attachment of glutamate to tRNA(Glu) in a two-step reaction: glutamate is first activated by ATP to form Glu-AMP and then transferred to the acceptor end of tRNA(Glu). This is Glutamate--tRNA ligase from Actinobacillus pleuropneumoniae serotype 5b (strain L20).